Here is a 444-residue protein sequence, read N- to C-terminus: Phosphoribosylamine--glycine ligase (444 aa).

In terms of domain architecture, ATP-grasp spans 109–324; sequence RNLFKKYEID…FLDVCFAIAE (216 aa). 140–202 is a binding site for ATP; sequence MTSLGKDVVV…EEKLVGVEFT (63 aa). Positions 282, 294, and 296 each coordinate Mg(2+). Gln-282, Glu-294, and Asn-296 together coordinate Mn(2+).

It belongs to the GARS family. The cofactor is Mg(2+). Mn(2+) is required as a cofactor.

The catalysed reaction is 5-phospho-beta-D-ribosylamine + glycine + ATP = N(1)-(5-phospho-beta-D-ribosyl)glycinamide + ADP + phosphate + H(+). It participates in purine metabolism; IMP biosynthesis via de novo pathway; N(1)-(5-phospho-D-ribosyl)glycinamide from 5-phospho-alpha-D-ribose 1-diphosphate: step 2/2. The protein is Phosphoribosylamine--glycine ligase of Methanococcus maripaludis (strain C5 / ATCC BAA-1333).